The primary structure comprises 372 residues: Chaperone protein DnaJ (372 aa).

The J domain maps to 3-68 (NLYEILEVNE…EKRKKYDMYG (66 aa)). The segment at 130-212 (GTKKEISYKK…CKGKGYEIER (83 aa)) adopts a CR-type zinc-finger fold. Residues Cys-143, Cys-146, Cys-160, Cys-163, Cys-186, Cys-189, Cys-200, and Cys-203 each contribute to the Zn(2+) site. CXXCXGXG motif repeat units lie at residues 143–150 (CHVCNGDG), 160–167 (CEKCHGTG), 186–193 (CDKCHGEG), and 200–207 (CENCKGKG).

This sequence belongs to the DnaJ family. Homodimer. Requires Zn(2+) as cofactor.

The protein resides in the cytoplasm. Its function is as follows. Participates actively in the response to hyperosmotic and heat shock by preventing the aggregation of stress-denatured proteins and by disaggregating proteins, also in an autonomous, DnaK-independent fashion. Unfolded proteins bind initially to DnaJ; upon interaction with the DnaJ-bound protein, DnaK hydrolyzes its bound ATP, resulting in the formation of a stable complex. GrpE releases ADP from DnaK; ATP binding to DnaK triggers the release of the substrate protein, thus completing the reaction cycle. Several rounds of ATP-dependent interactions between DnaJ, DnaK and GrpE are required for fully efficient folding. Also involved, together with DnaK and GrpE, in the DNA replication of plasmids through activation of initiation proteins. The polypeptide is Chaperone protein DnaJ (Finegoldia magna (strain ATCC 29328 / DSM 20472 / WAL 2508) (Peptostreptococcus magnus)).